We begin with the raw amino-acid sequence, 250 residues long: Cysteine proteinase inhibitor 12 (250 aa).

The first 32 residues, 1 to 32, serve as a signal peptide directing secretion; the sequence is MRVAATTRPASSSAAAPLPLFLLLAVAAAAAA. 2 consecutive Cystatin domains span residues 49-137 and 156-202; these read GGAH…RNTG and PGWR…AEVV. Residues 93-97 carry the Secondary area of contact motif; it reads QVVAG.

Belongs to the cystatin family. Phytocystatin subfamily.

Its subcellular location is the secreted. In terms of biological role, specific inhibitor of cysteine proteinases. Probably involved in the regulation of endogenous processes and in defense against pests and pathogens. This chain is Cysteine proteinase inhibitor 12, found in Oryza sativa subsp. japonica (Rice).